Reading from the N-terminus, the 752-residue chain is Multifunctional tryptophan biosynthesis protein (752 aa).

Residues phenylalanine 3–glycine 202 enclose the Glutamine amidotransferase type-1 domain. Glycine 58 to glycine 60 lines the L-glutamine pocket. Cysteine 86 acts as the Nucleophile; for GATase activity in catalysis. Position 136 to 137 (serine 136 to leucine 137) interacts with L-glutamine. Catalysis depends on for GATase activity residues histidine 176 and glutamate 178. The tract at residues isoleucine 231 to isoleucine 495 is indole-3-glycerol phosphate synthase. Residues leucine 509 to glycine 752 are N-(5'-phosphoribosyl)anthranilate isomerase.

The enzyme catalyses N-(5-phospho-beta-D-ribosyl)anthranilate = 1-(2-carboxyphenylamino)-1-deoxy-D-ribulose 5-phosphate. The catalysed reaction is 1-(2-carboxyphenylamino)-1-deoxy-D-ribulose 5-phosphate + H(+) = (1S,2R)-1-C-(indol-3-yl)glycerol 3-phosphate + CO2 + H2O. It carries out the reaction chorismate + L-glutamine = anthranilate + pyruvate + L-glutamate + H(+). It functions in the pathway amino-acid biosynthesis; L-tryptophan biosynthesis; L-tryptophan from chorismate: step 1/5. Its pathway is amino-acid biosynthesis; L-tryptophan biosynthesis; L-tryptophan from chorismate: step 3/5. It participates in amino-acid biosynthesis; L-tryptophan biosynthesis; L-tryptophan from chorismate: step 4/5. In terms of biological role, trifunctional enzyme bearing the Gln amidotransferase (GATase) domain of anthranilate synthase, indole-glycerolphosphate synthase, and phosphoribosylanthranilate isomerase activities. This Cryptococcus neoformans var. grubii serotype A (strain H99 / ATCC 208821 / CBS 10515 / FGSC 9487) (Filobasidiella neoformans var. grubii) protein is Multifunctional tryptophan biosynthesis protein (TRP1).